Reading from the N-terminus, the 186-residue chain is Adenine phosphoribosyltransferase (186 aa).

This sequence belongs to the purine/pyrimidine phosphoribosyltransferase family. As to quaternary structure, homodimer.

It localises to the cytoplasm. The enzyme catalyses AMP + diphosphate = 5-phospho-alpha-D-ribose 1-diphosphate + adenine. It participates in purine metabolism; AMP biosynthesis via salvage pathway; AMP from adenine: step 1/1. Catalyzes a salvage reaction resulting in the formation of AMP, that is energically less costly than de novo synthesis. In Xanthomonas euvesicatoria pv. vesicatoria (strain 85-10) (Xanthomonas campestris pv. vesicatoria), this protein is Adenine phosphoribosyltransferase.